A 428-amino-acid polypeptide reads, in one-letter code: Enolase (428 aa).

Q163 contacts (2R)-2-phosphoglycerate. E205 serves as the catalytic Proton donor. Mg(2+) is bound by residues D242, E285, and D312. (2R)-2-phosphoglycerate is bound by residues K337, R366, S367, and K388. The active-site Proton acceptor is K337.

The protein belongs to the enolase family. It depends on Mg(2+) as a cofactor.

It localises to the cytoplasm. Its subcellular location is the secreted. It is found in the cell surface. It carries out the reaction (2R)-2-phosphoglycerate = phosphoenolpyruvate + H2O. The protein operates within carbohydrate degradation; glycolysis; pyruvate from D-glyceraldehyde 3-phosphate: step 4/5. Its function is as follows. Catalyzes the reversible conversion of 2-phosphoglycerate (2-PG) into phosphoenolpyruvate (PEP). It is essential for the degradation of carbohydrates via glycolysis. The chain is Enolase from Neisseria meningitidis serogroup A / serotype 4A (strain DSM 15465 / Z2491).